The sequence spans 101 residues: Movement protein (101 aa).

A helical membrane pass occupies residues 30 to 50 (EVAVLSFVALICIYLLYLWVL). The disordered stretch occupies residues 78 to 101 (RSPIPNTLEPTAPVHPGPFVPGSG). Pro residues predominate over residues 90–101 (PVHPGPFVPGSG).

The protein belongs to the mastrevirus movement protein family. As to quaternary structure, interacts with the capsid protein (CP). Part of a MP-CP-viral DNA complex.

Its subcellular location is the host membrane. Involved in the viral transport within, and between cells. This is Movement protein from Maize streak virus genotype E (isolate Pat) (MSV).